We begin with the raw amino-acid sequence, 183 residues long: tRNA-splicing endonuclease (183 aa).

Active-site residues include Y120, H128, and K159.

The protein belongs to the tRNA-intron endonuclease family. Archaeal short subfamily. Homotetramer; although the tetramer contains four active sites, only two participate in the cleavage. Therefore, it should be considered as a dimer of dimers.

It catalyses the reaction pretRNA = a 3'-half-tRNA molecule with a 5'-OH end + a 5'-half-tRNA molecule with a 2',3'-cyclic phosphate end + an intron with a 2',3'-cyclic phosphate and a 5'-hydroxyl terminus.. Its function is as follows. Endonuclease that removes tRNA introns. Cleaves pre-tRNA at the 5'- and 3'-splice sites to release the intron. The products are an intron and two tRNA half-molecules bearing 2',3' cyclic phosphate and 5'-OH termini. Recognizes a pseudosymmetric substrate in which 2 bulged loops of 3 bases are separated by a stem of 4 bp. The sequence is that of tRNA-splicing endonuclease from Pyrobaculum aerophilum (strain ATCC 51768 / DSM 7523 / JCM 9630 / CIP 104966 / NBRC 100827 / IM2).